Consider the following 30-residue polypeptide: Trypsin inhibitor 2 (30 aa).

3 disulfide bridges follow: Cys-2–Cys-19, Cys-9–Cys-21, and Cys-15–Cys-27.

This sequence belongs to the protease inhibitor I7 (squash-type serine protease inhibitor) family.

Its subcellular location is the secreted. In terms of biological role, inhibits trypsin. The chain is Trypsin inhibitor 2 from Ecballium elaterium (Squirting cucumber).